The chain runs to 354 residues: Ephrin-4 (354 aa).

Positions 1-22 (MKRPLDFLLAICLILLRSSTFA) are cleaved as a signal peptide. An Ephrin RBD domain is found at 23–173 (DEHTVHWNST…SKNMRLSMKV (151 aa)). N-linked (GlcNAc...) asparagine glycosylation occurs at N30. 2 cysteine pairs are disulfide-bonded: C55–C92 and C80–C162. The disordered stretch occupies residues 173–196 (VLSSQPTPSPSSKPARSRTDARRQ). Positions 175–186 (SSQPTPSPSSKP) are enriched in low complexity. S335 carries GPI-anchor amidated serine lipidation. Residues 336 to 354 (SSSLPTFLIVFLIAVNLLF) constitute a propeptide, removed in mature form.

This sequence belongs to the ephrin family. May undergo proteolysis by metalloprotease sup-17 to give rise to a soluble form.

It is found in the cell membrane. In terms of biological role, regulates the formation or stabilization of cell-cell contacts at several stages of epithelial morphogenesis. In early embryonic development, involved in ventral closure of the epidermis. During male tail morphogenesis, regulates precursor cell sorting together with mab-20 and allows the formation of distinct sensory rays. Probably acts as a ligand for lad-2 to regulate axon guidance of several neurons including SDQL, SDQR, SMD and PLN neurons during neurogenesis. The sequence is that of Ephrin-4 (efn-4) from Caenorhabditis briggsae.